Reading from the N-terminus, the 723-residue chain is Fatty acid oxidation complex subunit alpha (723 aa).

Positions 1–189 are enoyl-CoA hydratase/isomerase; the sequence is MIYQADTLQV…KIGLLDAVVE (189 aa). Aspartate 296 provides a ligand contact to substrate. The interval 311–723 is 3-hydroxyacyl-CoA dehydrogenase; it reads SKDTERAAVL…FYGAQQQGSI (413 aa). Residues methionine 325, aspartate 344, 401 to 403, lysine 408, and serine 430 contribute to the NAD(+) site; that span reads VVE. Catalysis depends on histidine 451, which acts as the For 3-hydroxyacyl-CoA dehydrogenase activity. Residue asparagine 454 coordinates NAD(+). Substrate-binding residues include asparagine 501 and tyrosine 661.

The protein in the N-terminal section; belongs to the enoyl-CoA hydratase/isomerase family. This sequence in the C-terminal section; belongs to the 3-hydroxyacyl-CoA dehydrogenase family. In terms of assembly, heterotetramer of two alpha chains (FadB) and two beta chains (FadA).

The catalysed reaction is a (3S)-3-hydroxyacyl-CoA + NAD(+) = a 3-oxoacyl-CoA + NADH + H(+). The enzyme catalyses a (3S)-3-hydroxyacyl-CoA = a (2E)-enoyl-CoA + H2O. It carries out the reaction a 4-saturated-(3S)-3-hydroxyacyl-CoA = a (3E)-enoyl-CoA + H2O. It catalyses the reaction (3S)-3-hydroxybutanoyl-CoA = (3R)-3-hydroxybutanoyl-CoA. The catalysed reaction is a (3Z)-enoyl-CoA = a 4-saturated (2E)-enoyl-CoA. The enzyme catalyses a (3E)-enoyl-CoA = a 4-saturated (2E)-enoyl-CoA. Its pathway is lipid metabolism; fatty acid beta-oxidation. Functionally, involved in the aerobic and anaerobic degradation of long-chain fatty acids via beta-oxidation cycle. Catalyzes the formation of 3-oxoacyl-CoA from enoyl-CoA via L-3-hydroxyacyl-CoA. It can also use D-3-hydroxyacyl-CoA and cis-3-enoyl-CoA as substrate. This is Fatty acid oxidation complex subunit alpha from Vibrio parahaemolyticus serotype O3:K6 (strain RIMD 2210633).